A 528-amino-acid polypeptide reads, in one-letter code: Peptide chain release factor 3 (528 aa).

The region spanning 11 to 279 (NKRRTFAIIS…GIVEWAPKPL (269 aa)) is the tr-type G domain. GTP is bound by residues 20-27 (SHPDAGKT), 88-92 (DTPGH), and 142-145 (NKLD).

This sequence belongs to the TRAFAC class translation factor GTPase superfamily. Classic translation factor GTPase family. PrfC subfamily.

It is found in the cytoplasm. Increases the formation of ribosomal termination complexes and stimulates activities of RF-1 and RF-2. It binds guanine nucleotides and has strong preference for UGA stop codons. It may interact directly with the ribosome. The stimulation of RF-1 and RF-2 is significantly reduced by GTP and GDP, but not by GMP. This Shewanella sp. (strain W3-18-1) protein is Peptide chain release factor 3.